The primary structure comprises 136 residues: Small ribosomal subunit protein uS9 (136 aa).

The protein belongs to the universal ribosomal protein uS9 family.

This is Small ribosomal subunit protein uS9 from Borrelia garinii subsp. bavariensis (strain ATCC BAA-2496 / DSM 23469 / PBi) (Borreliella bavariensis).